A 98-amino-acid chain; its full sequence is Sm-like protein LSM8 (98 aa).

The Sm domain maps to 2–78 (AATTGLETLV…IGVIGELDEE (77 aa)).

It belongs to the snRNP Sm proteins family. As to quaternary structure, component of the heptameric LSM2-LSM8 complex that forms a seven-membered ring structure with a donut shape. The LSM subunits are arranged in the order LSM8, LSM2, LSM3, LSM6, LSM5, LSM7 and LSM4. LSM8 subunit interacts only with its two neighboring subunits, LSM2 and LSM4. Interacts with the prefoldin co-chaperone subunits PFD1, PFD2, PFD3, PFD4, PFD5 and PFD6. As to expression, expressed in roots, leaves, stems, flowers and siliques.

The protein resides in the nucleus. Functionally, component of the nuclear LSM2-LSM8 complex which is involved splicing nuclear mRNAs. LSM2-LSM8 binds directly to the U6 small nuclear RNAs (snRNAs). LSM8 is essential for the formation of the nuclear LSM2-LSM8 complex involved in the accurate splicing of selected development-related mRNAs through the stabilization of the spliceosomal U6 snRNA. Plays a critical role in the regulation of development-related gene expression. This chain is Sm-like protein LSM8, found in Arabidopsis thaliana (Mouse-ear cress).